We begin with the raw amino-acid sequence, 118 residues long: Protein yippee-like 1 (118 aa).

The Yippee domain occupies 19–116; it reads RTYSCIHCRA…IELAHMIKDN (98 aa). Zn(2+) is bound by residues Cys-23, Cys-26, Cys-79, and Cys-82. Residues 99-104 carry the Nuclear localization signal motif; sequence KYKEGK.

The protein belongs to the yippee family.

It is found in the nucleus. May play a role in epithelioid conversion of fibroblasts. The sequence is that of Protein yippee-like 1 (Ypel1) from Mus musculus (Mouse).